Reading from the N-terminus, the 600-residue chain is Adenine deaminase 2 (600 aa).

It belongs to the metallo-dependent hydrolases superfamily. Adenine deaminase family. Requires Mn(2+) as cofactor.

It carries out the reaction adenine + H2O + H(+) = hypoxanthine + NH4(+). The protein is Adenine deaminase 2 of Bradyrhizobium sp. (strain ORS 278).